Consider the following 460-residue polypeptide: C4-dicarboxylate transport protein (460 aa).

A run of 9 helical transmembrane segments spans residues 20 to 40 (SLYF…HFYP), 56 to 76 (LIKM…IAGM), 88 to 108 (YALL…LIVV), 153 to 173 (IVGA…VIFG), 200 to 220 (IINM…AFTI), 234 to 254 (LMIC…GAIC), 301 to 321 (VVGL…SIYL), 342 to 362 (ITLL…TGSG), and 364 to 384 (IVLA…LALI). Residues 438 to 460 (PEDDLGVAEGPTPANAVNTTKTV) form a disordered region.

It belongs to the dicarboxylate/amino acid:cation symporter (DAACS) (TC 2.A.23) family.

It localises to the cell inner membrane. In terms of biological role, responsible for the transport of dicarboxylates such as succinate, fumarate, and malate from the periplasm across the membrane. The chain is C4-dicarboxylate transport protein from Pseudomonas savastanoi pv. phaseolicola (strain 1448A / Race 6) (Pseudomonas syringae pv. phaseolicola (strain 1448A / Race 6)).